The sequence spans 618 residues: 1-deoxy-D-xylulose-5-phosphate synthase (618 aa).

Thiamine diphosphate-binding positions include histidine 77 and 118 to 120 (GHS). Mg(2+) is bound at residue aspartate 149. Thiamine diphosphate is bound by residues 150–151 (GA), asparagine 178, tyrosine 285, and glutamate 367. Asparagine 178 is a binding site for Mg(2+).

The protein belongs to the transketolase family. DXPS subfamily. Homodimer. The cofactor is Mg(2+). Thiamine diphosphate is required as a cofactor.

It carries out the reaction D-glyceraldehyde 3-phosphate + pyruvate + H(+) = 1-deoxy-D-xylulose 5-phosphate + CO2. It functions in the pathway metabolic intermediate biosynthesis; 1-deoxy-D-xylulose 5-phosphate biosynthesis; 1-deoxy-D-xylulose 5-phosphate from D-glyceraldehyde 3-phosphate and pyruvate: step 1/1. In terms of biological role, catalyzes the acyloin condensation reaction between C atoms 2 and 3 of pyruvate and glyceraldehyde 3-phosphate to yield 1-deoxy-D-xylulose-5-phosphate (DXP). The protein is 1-deoxy-D-xylulose-5-phosphate synthase of Idiomarina loihiensis (strain ATCC BAA-735 / DSM 15497 / L2-TR).